Here is a 530-residue protein sequence, read N- to C-terminus: Phosphoenolpyruvate carboxykinase (ATP) (530 aa).

The substrate site is built by arginine 58, tyrosine 195, and lysine 201. ATP is bound by residues lysine 201, histidine 220, and 236–244 (GLSGTGKTT). The Mn(2+) site is built by lysine 201 and histidine 220. Mn(2+) is bound at residue aspartate 257. ATP contacts are provided by residues glutamate 285, arginine 321, 440–441 (RI), and threonine 446. Arginine 321 contributes to the substrate binding site.

The protein belongs to the phosphoenolpyruvate carboxykinase (ATP) family. The cofactor is Mn(2+).

The protein localises to the cytoplasm. It catalyses the reaction oxaloacetate + ATP = phosphoenolpyruvate + ADP + CO2. Its pathway is carbohydrate biosynthesis; gluconeogenesis. Functionally, involved in the gluconeogenesis. Catalyzes the conversion of oxaloacetate (OAA) to phosphoenolpyruvate (PEP) through direct phosphoryl transfer between the nucleoside triphosphate and OAA. This chain is Phosphoenolpyruvate carboxykinase (ATP), found in Staphylococcus haemolyticus (strain JCSC1435).